The chain runs to 314 residues: Splicing factor YJU2 (314 aa).

Zn(2+) contacts are provided by C43, C46, C80, and C83. 2 disordered regions span residues 178–238 (MSQE…NEVP) and 253–314 (LAGL…DSDS). The span at 200–209 (EEARHRRLLE) shows a compositional bias: basic and acidic residues. Residues S211, S213, and S220 each carry the phosphoserine modification. The span at 222 to 232 (PRAAARPNPTA) shows a compositional bias: low complexity. A compositionally biased stretch (polar residues) spans 290 to 302 (PTPQTPGTSSLSQ). Phosphoserine occurs at positions 309, 312, and 314.

Belongs to the CWC16 family. YJU2 subfamily. As to quaternary structure, component of the spliceosome. Present in the activated B complex, the catalytically activated B* complex which catalyzes the branching, the catalytic step 1 C complex catalyzing the exon ligation, and the postcatalytic P complex containing the ligated exons (mRNA) and the excised lariat intron.

The protein resides in the nucleus. Part of the spliceosome which catalyzes two sequential transesterification reactions, first the excision of the non-coding intron from pre-mRNA and then the ligation of the coding exons to form the mature mRNA. Plays a role in stabilizing the structure of the spliceosome catalytic core and docking of the branch helix into the active site, producing 5'-exon and lariat intron-3'-intermediates. May protect cells from TP53-dependent apoptosis upon dsDNA break damage through association with PRP19-CD5L complex. The polypeptide is Splicing factor YJU2 (Mus musculus (Mouse)).